A 210-amino-acid chain; its full sequence is Dynein regulatory complex protein 12 (210 aa).

Positions 1-23 (MPPKNKEKGKKSGAQKKKKNWGA) are disordered. Over residues 7–20 (EKGKKSGAQKKKKN) the composition is skewed to basic residues. A coiled-coil region spans residues 49-161 (RDEARRAKAS…EAKYEEILHD (113 aa)). The tract at residues 188–210 (HKEQQRQFGLTPPGSLRPPAPSL) is disordered.

Belongs to the DRC12 family. In terms of assembly, component of the nexin-dynein regulatory complex (N-DRC).

Its subcellular location is the cytoplasm. It localises to the cytoskeleton. It is found in the flagellum axoneme. Component of the nexin-dynein regulatory complex (N-DRC), a key regulator of ciliary/flagellar motility which maintains the alignment and integrity of the distal axoneme and regulates microtubule sliding in motile axonemes. This Homo sapiens (Human) protein is Dynein regulatory complex protein 12.